Consider the following 673-residue polypeptide: Fatty acyl-CoA synthetase B (673 aa).

Residues 1–18 (MINNWLAVGLLVVSGILA) form the signal peptide. An N-linked (GlcNAc...) asparagine glycan is attached at N267.

It belongs to the ATP-dependent AMP-binding enzyme family.

The protein resides in the endoplasmic reticulum. The catalysed reaction is a long-chain fatty acid + ATP + CoA = a long-chain fatty acyl-CoA + AMP + diphosphate. Long chain fatty acid acyl-CoA synthetases catalyze the formation of a thiester bond between a free fatty acid and coenzyme A during fatty acid metabolic process. This is Fatty acyl-CoA synthetase B (fcsB) from Dictyostelium discoideum (Social amoeba).